A 69-amino-acid chain; its full sequence is A-kinase anchor protein inhibitor 1 (69 aa).

Residues 39-69 form a disordered region; that stretch reads QESLRREGRPGDSRAWGQLGGCELTKKHEKK. Over residues 41–50 the composition is skewed to basic and acidic residues; the sequence is SLRREGRPGD.

Binds cAMP-dependent protein kinase (PKA). Interacts specifically with RII-regulatory subunits of PKA (PRKAR2A and PRKAR2B). As to expression, preferentially expressed in the neural tissues.

In terms of biological role, protein kinase A (PKA)-binding protein. Binds to type II regulatory subunits of protein kinase A (PKA) and may block the A-kinase anchoring protein (AKAP)-mediated subcellular localization of PKA. The protein is A-kinase anchor protein inhibitor 1 of Mus musculus (Mouse).